The sequence spans 303 residues: Proline dehydrogenase 2 (303 aa).

Lysine 96 contacts substrate. The active site involves aspartate 130. Residues methionine 131 and glutamine 159 each coordinate FAD. Arginine 180 is a catalytic residue. FAD contacts are provided by residues 183 to 185 and 222 to 223; these read KGA and TH. 284 to 285 is a substrate binding site; the sequence is RR.

This sequence belongs to the proline dehydrogenase family. FAD serves as cofactor.

It catalyses the reaction L-proline + a quinone = (S)-1-pyrroline-5-carboxylate + a quinol + H(+). The protein operates within amino-acid degradation; L-proline degradation into L-glutamate; L-glutamate from L-proline: step 1/2. Its function is as follows. Converts proline to delta-1-pyrroline-5-carboxylate. Important for the use of proline as a sole carbon and energy source or a sole nitrogen source. The polypeptide is Proline dehydrogenase 2 (Bacillus subtilis (strain 168)).